Reading from the N-terminus, the 263-residue chain is Ubiquitin domain-containing protein 7SL RNA2 (263 aa).

The 53-residue stretch at 1–53 folds into the Ubiquitin-like 1 domain; the sequence is MNVDIDTETGSSFSITIDFGETVLQIKEKIEKSQGIPVSKQILYLDGKALEDD. Residues 74–93 form a disordered region; the sequence is ADPNQSNEQTEQSKQIDDKK. The segment covering 76-86 has biased composition (polar residues); it reads PNQSNEQTEQS. The Ubiquitin-like 2 domain occupies 184-263; that stretch reads FTVHVKPYQE…GDTIELIREK (80 aa).

Belongs to the ubiquitin family. In terms of tissue distribution, expressed in seedlings, roots, stems, rosettes and flowers (at protein level).

Its subcellular location is the nucleus. Its function is as follows. Controls phase transition from the vegetative to the reproductive state. Involved in the maintenance of the shoot apical meristem (SAM) thus preventing inflorescence meristem (IM) formation and subsequent inflorescence stem development during flowering. Regulates leaf and organ morphology. The protein is Ubiquitin domain-containing protein 7SL RNA2 of Arabidopsis thaliana (Mouse-ear cress).